We begin with the raw amino-acid sequence, 557 residues long: DNA mismatch repair protein MutL (557 aa).

This sequence belongs to the DNA mismatch repair MutL/HexB family.

Its function is as follows. This protein is involved in the repair of mismatches in DNA. It is required for dam-dependent methyl-directed DNA mismatch repair. May act as a 'molecular matchmaker', a protein that promotes the formation of a stable complex between two or more DNA-binding proteins in an ATP-dependent manner without itself being part of a final effector complex. This chain is DNA mismatch repair protein MutL, found in Methanothrix thermoacetophila (strain DSM 6194 / JCM 14653 / NBRC 101360 / PT) (Methanosaeta thermophila).